The primary structure comprises 388 residues: Succinate--CoA ligase [ADP-forming] subunit beta (388 aa).

The ATP-grasp domain occupies 9–244 (KQLFAEYGLP…PSQDDAREAH (236 aa)). Residues lysine 46, 53 to 55 (GRG), glutamate 99, threonine 102, and glutamate 107 each bind ATP. Residues asparagine 199 and aspartate 213 each contribute to the Mg(2+) site. Residues asparagine 264 and 321 to 323 (GIV) each bind substrate.

It belongs to the succinate/malate CoA ligase beta subunit family. As to quaternary structure, heterotetramer of two alpha and two beta subunits. The cofactor is Mg(2+).

The catalysed reaction is succinate + ATP + CoA = succinyl-CoA + ADP + phosphate. The enzyme catalyses GTP + succinate + CoA = succinyl-CoA + GDP + phosphate. Its pathway is carbohydrate metabolism; tricarboxylic acid cycle; succinate from succinyl-CoA (ligase route): step 1/1. Succinyl-CoA synthetase functions in the citric acid cycle (TCA), coupling the hydrolysis of succinyl-CoA to the synthesis of either ATP or GTP and thus represents the only step of substrate-level phosphorylation in the TCA. The beta subunit provides nucleotide specificity of the enzyme and binds the substrate succinate, while the binding sites for coenzyme A and phosphate are found in the alpha subunit. The sequence is that of Succinate--CoA ligase [ADP-forming] subunit beta from Pseudomonas putida (strain ATCC 700007 / DSM 6899 / JCM 31910 / BCRC 17059 / LMG 24140 / F1).